The following is a 285-amino-acid chain: RNA polymerase sigma factor RpoH (285 aa).

Residues 53–122 form a sigma-70 factor domain-2 region; sequence LILSHLRFVI…IHEYVLRNWR (70 aa). The short motif at 77–80 is the Interaction with polymerase core subunit RpoC element; it reads DLIQ. A sigma-70 factor domain-4 region spans residues 229–281; sequence ALLRLDERSRNIIRARWLDKKEKNTLQKIANNYGISAERVRQLEKNAMKKLKI. A DNA-binding region (H-T-H motif) is located at residues 254 to 273; sequence LQKIANNYGISAERVRQLEK.

This sequence belongs to the sigma-70 factor family. RpoH subfamily. As to quaternary structure, interacts with the RNA polymerase core enzyme.

It is found in the cytoplasm. In terms of biological role, sigma factors are initiation factors that promote the attachment of RNA polymerase to specific initiation sites and are then released. This sigma factor is involved in regulation of expression of heat shock genes. This is RNA polymerase sigma factor RpoH from Buchnera aphidicola subsp. Schizaphis graminum (strain Sg).